A 217-amino-acid chain; its full sequence is Sentrin-specific protease 8 (217 aa).

At Met-1 the chain carries N-acetylmethionine. The tract at residues 11-174 (SLLRQSDVSL…MYVICNTEAL (164 aa)) is protease. Catalysis depends on residues His-102 and Asp-119. Cys-163 serves as the catalytic Nucleophile.

This sequence belongs to the peptidase C48 family.

Functionally, protease that catalyzes two essential functions in the NEDD8 pathway: processing of full-length NEDD8 to its mature form and deconjugation of NEDD8 from targeted proteins such as cullins or p53. In Rattus norvegicus (Rat), this protein is Sentrin-specific protease 8 (Senp8).